The primary structure comprises 371 residues: Cytochrome b (371 aa).

A run of 4 helical transmembrane segments spans residues 25–45, 69–90, 105–125, and 170–190; these read FGSM…FLAI, WIMQ…YIHI, WLSG…GYVL, and FFAL…IHII. Heme b contacts are provided by histidine 75 and histidine 89. The heme b site is built by histidine 174 and histidine 188. An a ubiquinone-binding site is contributed by histidine 193. The next 4 helical transmembrane spans lie at 218–238, 280–300, 312–332, and 339–358; these read YKDT…LSFS, LGGT…PFTH, LAQM…WTAS, and FIII…IMNP.

The protein belongs to the cytochrome b family. The cytochrome bc1 complex contains 3 respiratory subunits (MT-CYB, CYC1 and UQCRFS1), 2 core proteins (UQCRC1 and UQCRC2) and probably 6 low-molecular weight proteins. Requires heme b as cofactor.

It is found in the mitochondrion inner membrane. In terms of biological role, component of the ubiquinol-cytochrome c reductase complex (complex III or cytochrome b-c1 complex) that is part of the mitochondrial respiratory chain. The b-c1 complex mediates electron transfer from ubiquinol to cytochrome c. Contributes to the generation of a proton gradient across the mitochondrial membrane that is then used for ATP synthesis. The sequence is that of Cytochrome b (MT-CYB) from Sinomicrurus kelloggi (Kellogg's coral snake).